We begin with the raw amino-acid sequence, 114 residues long: Large ribosomal subunit protein bL19 (114 aa).

The protein belongs to the bacterial ribosomal protein bL19 family.

In terms of biological role, this protein is located at the 30S-50S ribosomal subunit interface and may play a role in the structure and function of the aminoacyl-tRNA binding site. The sequence is that of Large ribosomal subunit protein bL19 (rplS) from Listeria innocua serovar 6a (strain ATCC BAA-680 / CLIP 11262).